Consider the following 329-residue polypeptide: Aurora kinase B (329 aa).

The segment covering 1–14 (MTLSRAKHANRNHL) has biased composition (basic residues). The segment at 1–21 (MTLSRAKHANRNHLPHLLAKV) is disordered. The region spanning 53–305 (FEMGAHLGRG…LVDVMTHYWV (253 aa)) is the Protein kinase domain. Residues 59-67 (LGRGKFGRV) and lysine 82 contribute to the ATP site. Catalysis depends on aspartate 178, which acts as the Proton acceptor.

Belongs to the protein kinase superfamily. Ser/Thr protein kinase family. Aurora subfamily. Interacts with Incenp and Cdc37. Mg(2+) is required as a cofactor.

It is found in the chromosome. It localises to the cytoplasm. The protein localises to the cytoskeleton. The protein resides in the midbody. It catalyses the reaction L-seryl-[protein] + ATP = O-phospho-L-seryl-[protein] + ADP + H(+). The catalysed reaction is L-threonyl-[protein] + ATP = O-phospho-L-threonyl-[protein] + ADP + H(+). Functionally, serine/threonine-protein kinase that mediates both meiotic and mitotic chromosome segregation. Required for histone H3 'Ser-10' phosphorylation. Phosphorylates mei-S332 within residues 124-126 and stabilizes its association with centromeres during meiosis. May regulate the function of the ESCRT-III complex core component shrb during abscission of germline cells in oogenesis. In Drosophila melanogaster (Fruit fly), this protein is Aurora kinase B.